The sequence spans 62 residues: MAVPKRKTSPMKRGFRRSADALAAPTYVEDKDSGELRRPHHVDLKTGMYRGRQILTPKNKEA.

The segment covering 1–16 (MAVPKRKTSPMKRGFR) has biased composition (basic residues). The segment at 1 to 62 (MAVPKRKTSP…QILTPKNKEA (62 aa)) is disordered. Basic and acidic residues predominate over residues 28–44 (VEDKDSGELRRPHHVDL).

The protein belongs to the bacterial ribosomal protein bL32 family.

The protein is Large ribosomal subunit protein bL32 of Methylocella silvestris (strain DSM 15510 / CIP 108128 / LMG 27833 / NCIMB 13906 / BL2).